A 488-amino-acid chain; its full sequence is 3-octaprenyl-4-hydroxybenzoate carboxy-lyase (488 aa).

Asn-172 serves as a coordination point for Mn(2+). Residues Ile-175–Arg-177, Arg-189–Leu-191, and Arg-194–Gly-195 contribute to the prenylated FMN site. Glu-238 provides a ligand contact to Mn(2+). Residue Asp-287 is the Proton donor of the active site.

It belongs to the UbiD family. Homohexamer. Prenylated FMN is required as a cofactor. Mn(2+) serves as cofactor.

Its subcellular location is the cell membrane. It carries out the reaction a 4-hydroxy-3-(all-trans-polyprenyl)benzoate + H(+) = a 2-(all-trans-polyprenyl)phenol + CO2. It participates in cofactor biosynthesis; ubiquinone biosynthesis. Its function is as follows. Catalyzes the decarboxylation of 3-octaprenyl-4-hydroxy benzoate to 2-octaprenylphenol, an intermediate step in ubiquinone biosynthesis. This chain is 3-octaprenyl-4-hydroxybenzoate carboxy-lyase, found in Pseudoalteromonas translucida (strain TAC 125).